Here is a 134-residue protein sequence, read N- to C-terminus: Cytochrome b5 (134 aa).

Residue Ala-2 is modified to N-acetylalanine. Residues Lys-7, Lys-10, and Lys-19 each carry the N6-acetyllysine modification. One can recognise a Cytochrome b5 heme-binding domain in the interval 9–85 (VKYYTLEEIQ…SKTYIIGELH (77 aa)). Heme contacts are provided by His-44 and His-68. A helical membrane pass occupies residues 109 to 131 (WWTNWVIPAISALVVALMYRLYM).

It belongs to the cytochrome b5 family.

The protein resides in the endoplasmic reticulum membrane. Its subcellular location is the microsome membrane. Cytochrome b5 is a membrane-bound hemoprotein functioning as an electron carrier for several membrane-bound oxygenases. It is also involved in several steps of the sterol biosynthesis pathway, particularly in the C-6 double bond introduction during the C-6 desaturation. The chain is Cytochrome b5 (Cyb5a) from Rattus norvegicus (Rat).